The following is a 430-amino-acid chain: Asparagine--tRNA ligase (430 aa).

This sequence belongs to the class-II aminoacyl-tRNA synthetase family. As to quaternary structure, homodimer.

Its subcellular location is the cytoplasm. The enzyme catalyses tRNA(Asn) + L-asparagine + ATP = L-asparaginyl-tRNA(Asn) + AMP + diphosphate + H(+). The polypeptide is Asparagine--tRNA ligase (Staphylococcus aureus (strain JH1)).